Consider the following 619-residue polypeptide: ATP-dependent DNA helicase RecQ (619 aa).

In terms of domain architecture, Helicase ATP-binding spans 37 to 205 (INAALNGQDA…LRHLNLKNLH (169 aa)). 50 to 57 (MATGNGKS) contributes to the ATP binding site. The DEAH box signature appears at 149 to 152 (DEAH). Residues 229 to 374 (QLTRFVLAQK…QIEQHKLEAI (146 aa)) form the Helicase C-terminal domain. 4 residues coordinate Zn(2+): C383, C400, C403, and C406. Residues 535-615 (ANYDKDLFAR…QEHKAILANA (81 aa)) enclose the HRDC domain.

Belongs to the helicase family. RecQ subfamily. Requires Mg(2+) as cofactor. It depends on Zn(2+) as a cofactor.

The catalysed reaction is Couples ATP hydrolysis with the unwinding of duplex DNA by translocating in the 3'-5' direction.. The enzyme catalyses ATP + H2O = ADP + phosphate + H(+). In terms of biological role, an ATP-dependent DNA helicase which unwinds DNA in a 3'-5' direction. Plays a role in recombination. This is ATP-dependent DNA helicase RecQ from Haemophilus influenzae (strain ATCC 51907 / DSM 11121 / KW20 / Rd).